A 2067-amino-acid chain; its full sequence is Lipoxygenase homology domain-containing protein 1 (2067 aa).

PLAT domains lie at 43-160 (RVYE…RDLL), 172-287 (NKYE…RDIL), 296-412 (ITYI…RQLY), 425-540 (FPWS…REMT), 553-673 (ARYH…RELL), 684-803 (FRYH…VELY), 814-934 (VHYE…RELL), 969-1087 (TTFS…RDLF), 1100-1225 (VPYE…RELV), 1254-1372 (VLYS…RLFY), 1421-1539 (IPYY…RVFD), 1552-1667 (VLYE…CEMC), 1679-1797 (TSYT…RDFA), 1810-1931 (TTYE…VFEV), and 1948-2064 (VKYE…RDLF).

It is found in the cell projection. The protein localises to the stereocilium. Involved in hearing. Required for normal function of hair cells in the inner ear. The chain is Lipoxygenase homology domain-containing protein 1 (LOXHD1) from Homo sapiens (Human).